Reading from the N-terminus, the 338-residue chain is Holliday junction branch migration complex subunit RuvB (338 aa).

Positions Met1–Tyr181 are large ATPase domain (RuvB-L). Residues Leu20, Arg21, Gly62, Lys65, Thr66, Thr67, Glu128–Phe130, Arg171, Tyr181, and Arg218 each bind ATP. Position 66 (Thr66) interacts with Mg(2+). Residues Thr182–Glu252 form a small ATPAse domain (RuvB-S) region. A head domain (RuvB-H) region spans residues Glu255–Phe338. DNA-binding residues include Arg310 and Arg315.

This sequence belongs to the RuvB family. As to quaternary structure, homohexamer. Forms an RuvA(8)-RuvB(12)-Holliday junction (HJ) complex. HJ DNA is sandwiched between 2 RuvA tetramers; dsDNA enters through RuvA and exits via RuvB. An RuvB hexamer assembles on each DNA strand where it exits the tetramer. Each RuvB hexamer is contacted by two RuvA subunits (via domain III) on 2 adjacent RuvB subunits; this complex drives branch migration. In the full resolvosome a probable DNA-RuvA(4)-RuvB(12)-RuvC(2) complex forms which resolves the HJ.

It is found in the cytoplasm. The enzyme catalyses ATP + H2O = ADP + phosphate + H(+). The RuvA-RuvB-RuvC complex processes Holliday junction (HJ) DNA during genetic recombination and DNA repair, while the RuvA-RuvB complex plays an important role in the rescue of blocked DNA replication forks via replication fork reversal (RFR). RuvA specifically binds to HJ cruciform DNA, conferring on it an open structure. The RuvB hexamer acts as an ATP-dependent pump, pulling dsDNA into and through the RuvAB complex. RuvB forms 2 homohexamers on either side of HJ DNA bound by 1 or 2 RuvA tetramers; 4 subunits per hexamer contact DNA at a time. Coordinated motions by a converter formed by DNA-disengaged RuvB subunits stimulates ATP hydrolysis and nucleotide exchange. Immobilization of the converter enables RuvB to convert the ATP-contained energy into a lever motion, pulling 2 nucleotides of DNA out of the RuvA tetramer per ATP hydrolyzed, thus driving DNA branch migration. The RuvB motors rotate together with the DNA substrate, which together with the progressing nucleotide cycle form the mechanistic basis for DNA recombination by continuous HJ branch migration. Branch migration allows RuvC to scan DNA until it finds its consensus sequence, where it cleaves and resolves cruciform DNA. The chain is Holliday junction branch migration complex subunit RuvB from Geotalea uraniireducens (strain Rf4) (Geobacter uraniireducens).